A 412-amino-acid chain; its full sequence is Protein MITOFERRINLIKE 1, chloroplastic (412 aa).

A chloroplast-targeting transit peptide spans 1-92 (MEARLSETLG…PGPEFLKWIK (92 aa)). The segment at 43–83 (VRNPKLKTKSSQKPPKFSANFRRSDPPFASTSISDPTHEKP) is disordered. Solcar repeat units lie at residues 112–198 (ERAI…GKSL), 206–288 (PTVL…LKAA), and 298–392 (LEPL…ARLT). A run of 6 helical transmembrane segments spans residues 115–135 (IIGA…LLPL), 167–187 (ILGF…SSAV), 208–228 (VLIP…IMVP), 262–282 (AGYS…YSSF), 303–323 (SVCC…PLDV), and 365–385 (TRGM…GYFA).

The protein belongs to the mitochondrial carrier (TC 2.A.29) family. Expressed in leaves, developing flowers and siliques.

The protein localises to the plastid. It localises to the chloroplast inner membrane. Its function is as follows. Probably involved in iron transport into chloroplasts. This chain is Protein MITOFERRINLIKE 1, chloroplastic (MFL1), found in Arabidopsis thaliana (Mouse-ear cress).